Consider the following 202-residue polypeptide: Glycerol-3-phosphate acyltransferase (202 aa).

4 consecutive transmembrane segments (helical) span residues 1–21 (MTLI…FGVL), 84–104 (AVAA…FLHF), 116–136 (ILLG…LAVA), and 143–163 (SLAA…FLGF).

The protein belongs to the PlsY family. Probably interacts with PlsX.

It localises to the cell inner membrane. The enzyme catalyses an acyl phosphate + sn-glycerol 3-phosphate = a 1-acyl-sn-glycero-3-phosphate + phosphate. It participates in lipid metabolism; phospholipid metabolism. Functionally, catalyzes the transfer of an acyl group from acyl-phosphate (acyl-PO(4)) to glycerol-3-phosphate (G3P) to form lysophosphatidic acid (LPA). This enzyme utilizes acyl-phosphate as fatty acyl donor, but not acyl-CoA or acyl-ACP. The polypeptide is Glycerol-3-phosphate acyltransferase (Nitrosospira multiformis (strain ATCC 25196 / NCIMB 11849 / C 71)).